We begin with the raw amino-acid sequence, 328 residues long: BURP domain-containing protein 11 (328 aa).

Residues 74-318 enclose the BURP domain; that stretch reads FFFRDALRPG…TKLSIVWVPR (245 aa).

Expressed in roots.

The sequence is that of BURP domain-containing protein 11 (BURP11) from Oryza sativa subsp. japonica (Rice).